Consider the following 185-residue polypeptide: Ribosome-recycling factor (185 aa).

This sequence belongs to the RRF family.

It is found in the cytoplasm. Its function is as follows. Responsible for the release of ribosomes from messenger RNA at the termination of protein biosynthesis. May increase the efficiency of translation by recycling ribosomes from one round of translation to another. The protein is Ribosome-recycling factor of Azoarcus sp. (strain BH72).